Here is a 550-residue protein sequence, read N- to C-terminus: Hydroxylamine reductase (550 aa).

[2Fe-2S] cluster is bound by residues Cys3, Cys6, Cys18, and Cys25. Positions 249, 273, 317, 405, 433, 458, 492, and 494 each coordinate hybrid [4Fe-2O-2S] cluster. Cys405 is modified (cysteine persulfide).

The protein belongs to the HCP family. [2Fe-2S] cluster is required as a cofactor. Requires hybrid [4Fe-2O-2S] cluster as cofactor.

Its subcellular location is the cytoplasm. The enzyme catalyses A + NH4(+) + H2O = hydroxylamine + AH2 + H(+). In terms of biological role, catalyzes the reduction of hydroxylamine to form NH(3) and H(2)O. The polypeptide is Hydroxylamine reductase (Enterobacter sp. (strain 638)).